The following is a 104-amino-acid chain: Phosphoribosyl-ATP pyrophosphatase (104 aa).

It belongs to the PRA-PH family.

It is found in the cytoplasm. It catalyses the reaction 1-(5-phospho-beta-D-ribosyl)-ATP + H2O = 1-(5-phospho-beta-D-ribosyl)-5'-AMP + diphosphate + H(+). The protein operates within amino-acid biosynthesis; L-histidine biosynthesis; L-histidine from 5-phospho-alpha-D-ribose 1-diphosphate: step 2/9. In Methanosarcina acetivorans (strain ATCC 35395 / DSM 2834 / JCM 12185 / C2A), this protein is Phosphoribosyl-ATP pyrophosphatase (hisE).